Consider the following 282-residue polypeptide: Bis(5'-nucleosyl)-tetraphosphatase, symmetrical (282 aa).

The protein belongs to the Ap4A hydrolase family.

It carries out the reaction P(1),P(4)-bis(5'-adenosyl) tetraphosphate + H2O = 2 ADP + 2 H(+). Its function is as follows. Hydrolyzes diadenosine 5',5'''-P1,P4-tetraphosphate to yield ADP. This Burkholderia pseudomallei (strain 668) protein is Bis(5'-nucleosyl)-tetraphosphatase, symmetrical.